The sequence spans 60 residues: Large ribosomal subunit protein bL32 (60 aa).

It belongs to the bacterial ribosomal protein bL32 family.

This Borreliella burgdorferi (strain ATCC 35210 / DSM 4680 / CIP 102532 / B31) (Borrelia burgdorferi) protein is Large ribosomal subunit protein bL32 (rpmF).